The chain runs to 277 residues: Soluble NSF attachment protein 29 (277 aa).

Basic and acidic residues predominate over residues 1 to 11 (MSRNPFDDDYR). Disordered stretches follow at residues 1 to 30 (MSRN…MGHY), 49 to 73 (ESLD…STAQ), and 117 to 170 (KFTK…ESSR). A compositionally biased stretch (polar residues) spans 14–28 (AASSTMPVKSYTTMG). The region spanning 44-106 (EKTLQESLDS…QMTQRNLNSL (63 aa)) is the t-SNARE coiled-coil homology 1 domain. A compositionally biased stretch (basic and acidic residues) spans 49–65 (ESLDSTERSRRHLENSE). The segment covering 134–170 (SKSASRLSETATNLSSGGGSATFSGPSGQRTLTESSR) has biased composition (polar residues). In terms of domain architecture, t-SNARE coiled-coil homology 2 spans 179 to 241 (EAMDNQIDEN…RDQDKQMQKI (63 aa)).

It belongs to the SNAP-25 family.

It is found in the synapse. Its subcellular location is the synaptosome. Its function is as follows. SNAREs, soluble N-ethylmaleimide-sensitive factor-attachment protein receptors, are essential proteins for fusion of cellular membranes. SNAREs localized on opposing membranes assemble to form a trans-SNARE complex, an extended, parallel four alpha-helical bundle that drives membrane fusion. Plays a role in the processing and secretion of the aspartic protease hrg-7 from the intestine. The polypeptide is Soluble NSF attachment protein 29 (Caenorhabditis elegans).